Consider the following 163-residue polypeptide: Photosystem II extrinsic protein V (163 aa).

The first 26 residues, 1–26 (MFKTYSKSFACILFCIFNIFVVSASA), serve as a signal peptide directing secretion. Heme c contacts are provided by cysteine 63, cysteine 66, histidine 67, and methionine 130.

This sequence belongs to the cytochrome c family. PsbV subfamily. As to quaternary structure, PSII is composed of 1 copy each of membrane proteins PsbA, PsbB, PsbC, PsbD, PsbE, PsbF, PsbH, PsbI, PsbJ, PsbK, PsbL, PsbM, PsbT, PsbY, PsbZ, Psb30/Ycf12, at least 3 peripheral proteins of the oxygen-evolving complex and a large number of cofactors. It forms dimeric complexes. Heme c serves as cofactor.

Its subcellular location is the plastid. It localises to the chloroplast thylakoid membrane. Functionally, one of the extrinsic, lumenal subunits of photosystem II (PSII). PSII is a light-driven water plastoquinone oxidoreductase, using light energy to abstract electrons from H(2)O, generating a proton gradient subsequently used for ATP formation. The extrinsic proteins stabilize the structure of photosystem II oxygen-evolving complex (OEC), the ion environment of oxygen evolution and protect the OEC against heat-induced inactivation. This chain is Photosystem II extrinsic protein V, found in Thalassiosira pseudonana (Marine diatom).